A 181-amino-acid chain; its full sequence is Small ribosomal subunit protein bS16 (181 aa).

A disordered region spans residues 150–181 (KKAAEEAAKAAAEAPAEEAAPAEETATEAAAE). Over residues 158 to 181 (KAAAEAPAEEAAPAEETATEAAAE) the composition is skewed to low complexity.

Belongs to the bacterial ribosomal protein bS16 family.

The sequence is that of Small ribosomal subunit protein bS16 from Bacteroides fragilis (strain YCH46).